A 202-amino-acid chain; its full sequence is LexA repressor (202 aa).

A DNA-binding region (H-T-H motif) is located at residues 28-48 (RAEIAQQLGFRSPNAAEEHLK). Catalysis depends on for autocatalytic cleavage activity residues S119 and K156.

It belongs to the peptidase S24 family. Homodimer.

It carries out the reaction Hydrolysis of Ala-|-Gly bond in repressor LexA.. In terms of biological role, represses a number of genes involved in the response to DNA damage (SOS response), including recA and lexA. Binds to the 16 bp palindromic sequence 5'-CTGTATATATATACAG-3'. In the presence of single-stranded DNA, RecA interacts with LexA causing an autocatalytic cleavage which disrupts the DNA-binding part of LexA, leading to derepression of the SOS regulon and eventually DNA repair. This chain is LexA repressor, found in Pectobacterium carotovorum subsp. carotovorum (Erwinia carotovora subsp. carotovora).